The primary structure comprises 426 residues: Serine--tRNA ligase (426 aa).

Residue 229–231 (TAE) coordinates L-serine. 260 to 262 (RSE) contacts ATP. Glu-283 is a binding site for L-serine. 347 to 350 (EIAS) provides a ligand contact to ATP. Residue Ser-383 participates in L-serine binding.

The protein belongs to the class-II aminoacyl-tRNA synthetase family. Type-1 seryl-tRNA synthetase subfamily. As to quaternary structure, homodimer. The tRNA molecule binds across the dimer.

It localises to the cytoplasm. The enzyme catalyses tRNA(Ser) + L-serine + ATP = L-seryl-tRNA(Ser) + AMP + diphosphate + H(+). The catalysed reaction is tRNA(Sec) + L-serine + ATP = L-seryl-tRNA(Sec) + AMP + diphosphate + H(+). The protein operates within aminoacyl-tRNA biosynthesis; selenocysteinyl-tRNA(Sec) biosynthesis; L-seryl-tRNA(Sec) from L-serine and tRNA(Sec): step 1/1. In terms of biological role, catalyzes the attachment of serine to tRNA(Ser). Is also able to aminoacylate tRNA(Sec) with serine, to form the misacylated tRNA L-seryl-tRNA(Sec), which will be further converted into selenocysteinyl-tRNA(Sec). In Rickettsia bellii (strain RML369-C), this protein is Serine--tRNA ligase.